A 340-amino-acid polypeptide reads, in one-letter code: RNA 3'-terminal phosphate cyclase (340 aa).

ATP is bound by residues Q102 and 284–288; that span reads FLGDQ. Residue H308 is the Tele-AMP-histidine intermediate of the active site.

It belongs to the RNA 3'-terminal cyclase family. Type 1 subfamily.

Its subcellular location is the cytoplasm. The enzyme catalyses a 3'-end 3'-phospho-ribonucleotide-RNA + ATP = a 3'-end 2',3'-cyclophospho-ribonucleotide-RNA + AMP + diphosphate. In terms of biological role, catalyzes the conversion of 3'-phosphate to a 2',3'-cyclic phosphodiester at the end of RNA. The mechanism of action of the enzyme occurs in 3 steps: (A) adenylation of the enzyme by ATP; (B) transfer of adenylate to an RNA-N3'P to produce RNA-N3'PP5'A; (C) and attack of the adjacent 2'-hydroxyl on the 3'-phosphorus in the diester linkage to produce the cyclic end product. The biological role of this enzyme is unknown but it is likely to function in some aspects of cellular RNA processing. This Thermococcus onnurineus (strain NA1) protein is RNA 3'-terminal phosphate cyclase.